We begin with the raw amino-acid sequence, 475 residues long: Ribulose bisphosphate carboxylase large chain (475 aa).

A propeptide spanning residues 1–2 is cleaved from the precursor; that stretch reads MS. At Pro3 the chain carries N-acetylproline. Lys14 is modified (N6,N6,N6-trimethyllysine). Residues Asn123 and Thr173 each contribute to the substrate site. Lys175 acts as the Proton acceptor in catalysis. Lys177 contacts substrate. 3 residues coordinate Mg(2+): Lys201, Asp203, and Glu204. Lys201 carries the N6-carboxylysine modification. His294 (proton acceptor) is an active-site residue. Arg295, His327, and Ser379 together coordinate substrate.

It belongs to the RuBisCO large chain family. Type I subfamily. As to quaternary structure, heterohexadecamer of 8 large chains and 8 small chains. It depends on Mg(2+) as a cofactor.

The protein resides in the plastid. It is found in the chloroplast. It catalyses the reaction 2 (2R)-3-phosphoglycerate + 2 H(+) = D-ribulose 1,5-bisphosphate + CO2 + H2O. It carries out the reaction D-ribulose 1,5-bisphosphate + O2 = 2-phosphoglycolate + (2R)-3-phosphoglycerate + 2 H(+). Functionally, ruBisCO catalyzes two reactions: the carboxylation of D-ribulose 1,5-bisphosphate, the primary event in carbon dioxide fixation, as well as the oxidative fragmentation of the pentose substrate in the photorespiration process. Both reactions occur simultaneously and in competition at the same active site. The chain is Ribulose bisphosphate carboxylase large chain from Chlorella vulgaris (Green alga).